Consider the following 437-residue polypeptide: Proton/glutamate-aspartate symporter (437 aa).

At 1–5 (MKNIK) the chain is on the cytoplasmic side. A helical membrane pass occupies residues 6–26 (FSLAWQILFAMVLGILLGSYL). Over 27–50 (HYHSDSRDWLVVNLLSPAGDIFIH) the chain is Periplasmic. The helical transmembrane segment at 51–71 (LIKMIVVPIVISTLVVGIAGV) threads the bilayer. Over 72 to 84 (GDAKQLGRIGAKT) the chain is Cytoplasmic. The chain crosses the membrane as a helical span at residues 85-105 (IIYFEVITTVAIILGITLANV). Residues 106–159 (FQPGAGVDMSQLATVDISKYQSTTEAVQSSSHGIMGTILSLVPTNIVASMAKGE) are Periplasmic-facing. The chain crosses the membrane as a helical span at residues 160–180 (MLPIIFFSVLFGLGLSSLPAT). The Cytoplasmic segment spans residues 181–210 (HREPLVTVFRSISETMFKVTHMVMRYAPVG). The chain crosses the membrane as a helical span at residues 211-231 (VFALIAVTVANFGFSSLWPLA). A topological domain (periplasmic) is located at residue Lys-232. The chain crosses the membrane as a helical span at residues 233 to 253 (LVLLVHFAILFFALVVLGIVA). Topologically, residues 254-292 (RLCGLSVWILIRILKDELILAYSTASSESVLPRIIEKME) are cytoplasmic. A helical membrane pass occupies residues 293–313 (AYGAPVSITSFVVPTGYSFNL). At 314–324 (DGSTLYQSIAA) the chain is on the periplasmic side. A helical transmembrane segment spans residues 325–345 (IFIAQLYGIDLSIWQEIILVL). The Cytoplasmic portion of the chain corresponds to 346-361 (TLMVTSKGIAGVPGVS). A helical membrane pass occupies residues 362–382 (FVVLLATLGSVGIPLEGLAFI). The Periplasmic portion of the chain corresponds to 383–387 (AGVDR). Residues 388-408 (ILDMARTALNVVGNALAVLVI) form a helical membrane-spanning segment. Over 409–437 (AKWEHKFDRKKALAYEREVLGKFDKTADQ) the chain is Cytoplasmic.

Belongs to the dicarboxylate/amino acid:cation symporter (DAACS) (TC 2.A.23) family. GltP subfamily.

It is found in the cell inner membrane. Its activity is regulated as follows. Glutamate uptake is inhibited by L-cysteate and beta-hydroxyaspartate. Inhibited by the uncoupler carbonylcyanide m-chlorophenylhydrazone (CCCP). Catalyzes the proton-dependent, binding-protein-independent transport of glutamate and aspartate. The sequence is that of Proton/glutamate-aspartate symporter from Escherichia coli (strain K12).